Reading from the N-terminus, the 165-residue chain is HTH-type transcriptional regulator IscR (165 aa).

The region spanning 2 to 131 is the HTH rrf2-type domain; the sequence is RLTSKGRYAV…NNITLAELVN (130 aa). The H-T-H motif DNA-binding region spans 28–51; sequence LADISERQGISLSYLEQLFSRLRK. Residues Cys-92, Cys-98, and Cys-104 each coordinate [2Fe-2S] cluster.

[2Fe-2S] cluster is required as a cofactor.

Functionally, regulates the transcription of several operons and genes involved in the biogenesis of Fe-S clusters and Fe-S-containing proteins. The protein is HTH-type transcriptional regulator IscR of Erwinia tasmaniensis (strain DSM 17950 / CFBP 7177 / CIP 109463 / NCPPB 4357 / Et1/99).